The primary structure comprises 275 residues: Glutamate racemase (275 aa).

Substrate-binding positions include 12 to 13 (DS) and 44 to 45 (YG). Residue C75 is the Proton donor/acceptor of the active site. 76-77 (NT) serves as a coordination point for substrate. C185 acts as the Proton donor/acceptor in catalysis. A substrate-binding site is contributed by 186–187 (TH).

Belongs to the aspartate/glutamate racemases family.

The enzyme catalyses L-glutamate = D-glutamate. It functions in the pathway cell wall biogenesis; peptidoglycan biosynthesis. Provides the (R)-glutamate required for cell wall biosynthesis. The polypeptide is Glutamate racemase (Mycolicibacterium paratuberculosis (strain ATCC BAA-968 / K-10) (Mycobacterium paratuberculosis)).